Here is a 485-residue protein sequence, read N- to C-terminus: UDP-N-acetylmuramoyl-L-alanyl-D-glutamate--2,6-diaminopimelate ligase (485 aa).

Serine 30 contributes to the UDP-N-acetyl-alpha-D-muramoyl-L-alanyl-D-glutamate binding site. 113–119 (GTNGKTT) contributes to the ATP binding site. UDP-N-acetyl-alpha-D-muramoyl-L-alanyl-D-glutamate is bound by residues 155–156 (TT), serine 182, and arginine 190. The residue at position 222 (lysine 222) is an N6-carboxylysine. Residues arginine 381, 405-408 (DNPR), glycine 455, and glutamate 459 each bind meso-2,6-diaminopimelate. A Meso-diaminopimelate recognition motif motif is present at residues 405-408 (DNPR).

This sequence belongs to the MurCDEF family. MurE subfamily. Requires Mg(2+) as cofactor. In terms of processing, carboxylation is probably crucial for Mg(2+) binding and, consequently, for the gamma-phosphate positioning of ATP.

It is found in the cytoplasm. The enzyme catalyses UDP-N-acetyl-alpha-D-muramoyl-L-alanyl-D-glutamate + meso-2,6-diaminopimelate + ATP = UDP-N-acetyl-alpha-D-muramoyl-L-alanyl-gamma-D-glutamyl-meso-2,6-diaminopimelate + ADP + phosphate + H(+). It functions in the pathway cell wall biogenesis; peptidoglycan biosynthesis. Its function is as follows. Catalyzes the addition of meso-diaminopimelic acid to the nucleotide precursor UDP-N-acetylmuramoyl-L-alanyl-D-glutamate (UMAG) in the biosynthesis of bacterial cell-wall peptidoglycan. This is UDP-N-acetylmuramoyl-L-alanyl-D-glutamate--2,6-diaminopimelate ligase from Clostridium tetani (strain Massachusetts / E88).